Reading from the N-terminus, the 404-residue chain is Cysteine desulfurase IscS (404 aa).

Pyridoxal 5'-phosphate contacts are provided by residues 75-76 (AT), Asn-155, Gln-183, and 203-205 (SAH). Lys-206 bears the N6-(pyridoxal phosphate)lysine mark. Residue Thr-243 participates in pyridoxal 5'-phosphate binding. Cys-328 (cysteine persulfide intermediate) is an active-site residue. Cys-328 is a binding site for [2Fe-2S] cluster.

The protein belongs to the class-V pyridoxal-phosphate-dependent aminotransferase family. NifS/IscS subfamily. As to quaternary structure, homodimer. Forms a heterotetramer with IscU, interacts with other sulfur acceptors. Requires pyridoxal 5'-phosphate as cofactor.

Its subcellular location is the cytoplasm. The catalysed reaction is (sulfur carrier)-H + L-cysteine = (sulfur carrier)-SH + L-alanine. It participates in cofactor biosynthesis; iron-sulfur cluster biosynthesis. Its function is as follows. Master enzyme that delivers sulfur to a number of partners involved in Fe-S cluster assembly, tRNA modification or cofactor biosynthesis. Catalyzes the removal of elemental sulfur atoms from cysteine to produce alanine. Functions as a sulfur delivery protein for Fe-S cluster synthesis onto IscU, an Fe-S scaffold assembly protein, as well as other S acceptor proteins. The polypeptide is Cysteine desulfurase IscS (Stutzerimonas stutzeri (strain A1501) (Pseudomonas stutzeri)).